A 217-amino-acid chain; its full sequence is UPF0502 protein ASA_1460 (217 aa).

The protein belongs to the UPF0502 family.

The polypeptide is UPF0502 protein ASA_1460 (Aeromonas salmonicida (strain A449)).